Here is a 347-residue protein sequence, read N- to C-terminus: uncharacterized protein (347 aa).

Positions 1–21 are cleaved as a signal peptide; it reads MNKKSLNIVVMFGILMILAFS.

The protein belongs to the bacterial solute-binding protein 1 family. WtpA subfamily.

This is an uncharacterized protein from Methanococcus maripaludis (strain C5 / ATCC BAA-1333).